We begin with the raw amino-acid sequence, 577 residues long: Solute carrier family 22 member 16 (577 aa).

The helical transmembrane segment at 23–43 (LYFICAFQNISCGIHYLASVF) threads the bilayer. N-linked (GlcNAc...) asparagine glycosylation is found at N57, N65, N68, and N108. 5 consecutive transmembrane segments (helical) span residues 152-172 (WLAM…SVTF), 183-203 (VVLW…AFAV), 214-234 (FLAM…MEFI), 244-264 (VHLH…GYLV), and 268-288 (WLYQ…CWVL). 2 N-linked (GlcNAc...) asparagine glycosylation sites follow: N345 and N352. A run of 6 helical transmembrane segments spans residues 359-379 (TLTV…FSLN), 389-409 (LNLF…CIAM), 416-436 (TVLA…MVIP), 441-461 (ILGV…FGLI), 476-496 (LAVG…PFSV), and 501-521 (IWIF…GVLT). A disordered region spans residues 543–577 (ESENESKSSKLLLTTNNSGLEKTEAITPRDSGLGE). N-linked (GlcNAc...) asparagine glycans are attached at residues N546 and N558. Positions 551-560 (SKLLLTTNNS) are enriched in low complexity.

It belongs to the major facilitator (TC 2.A.1) superfamily. Organic cation transporter (TC 2.A.1.19) family. As to expression, expressed in testis and epididymis (at protein level). Expressed in endometrium (at protein level); highly expressed during the normal secretory phase, but expression is significantly reduced in the proliferative phase. Expressed at lower levels in adult tissues including bone marrow (at protein level). Expressed in hematopoietic cells, including CD34(+) leukocytes. Expressed in fetal liver (at protein level), brain, lung, kidney, heart, skeletal muscle, spleen and thymus. Expressed in leukemia cells. Abundantly expressed in ovarian cancer clear-cell adenocarcinoma.

It localises to the cell membrane. The enzyme catalyses (R)-carnitine(in) = (R)-carnitine(out). It carries out the reaction spermidine(in) = spermidine(out). Functionally, facilitative organic cation transporter that mediates the transport of carnitine as well as the polyamine spermidine. Mediates the partially Na(+)-dependent bidirectional transport of carnitine. May mediate L-carnitine secretion from testis epididymal epithelium into the lumen which is involved in the maturation of spermatozoa. This is Solute carrier family 22 member 16 from Homo sapiens (Human).